The following is a 1191-amino-acid chain: DNA-directed RNA polymerase II subunit RPB2 (1191 aa).

Mg(2+) is bound at residue aspartate 799. The segment at alanine 842 to histidine 903 is disordered. Positions threonine 878 to arginine 891 are enriched in polar residues. Positions threonine 893–histidine 903 are enriched in basic and acidic residues. Cysteine 1123, cysteine 1126, cysteine 1141, and cysteine 1144 together coordinate Zn(2+). The segment at cysteine 1123 to cysteine 1144 adopts a C4-type zinc-finger fold.

This sequence belongs to the RNA polymerase beta chain family. Component of the RNA polymerase II (Pol II) complex consisting of 12 subunits.

The protein resides in the nucleus. It carries out the reaction RNA(n) + a ribonucleoside 5'-triphosphate = RNA(n+1) + diphosphate. In terms of biological role, DNA-dependent RNA polymerase catalyzes the transcription of DNA into RNA using the four ribonucleoside triphosphates as substrates. Second largest component of RNA polymerase II which synthesizes mRNA precursors and many functional non-coding RNAs. Proposed to contribute to the polymerase catalytic activity and forms the polymerase active center together with the largest subunit. Pol II is the central component of the basal RNA polymerase II transcription machinery. It is composed of mobile elements that move relative to each other. RPB2 is part of the core element with the central large cleft, the clamp element that moves to open and close the cleft and the jaws that are thought to grab the incoming DNA template. This chain is DNA-directed RNA polymerase II subunit RPB2 (RPB2), found in Solanum lycopersicum (Tomato).